Reading from the N-terminus, the 57-residue chain is Small nuclear protein PRAC1 (57 aa).

The tract at residues 38 to 57 is disordered; that stretch reads RSDGSACNSGISGGRGRKIP.

Highly expressed in prostate, rectum, and distal colon, and weakly expressed in bladder. Expressed in prostate cancer cell lines.

The protein localises to the nucleus. This chain is Small nuclear protein PRAC1 (PRAC1), found in Homo sapiens (Human).